Here is a 130-residue protein sequence, read N- to C-terminus: Fluoride-specific ion channel FluC (130 aa).

Helical transmembrane passes span 2–22, 36–56, 71–91, and 100–120; these read GLLL…RFAL, GILL…AFLI, FLLV…SLDI, and IFIA…AVIL. Na(+) contacts are provided by glycine 79 and threonine 82.

This sequence belongs to the fluoride channel Fluc/FEX (TC 1.A.43) family.

The protein resides in the cell inner membrane. It carries out the reaction fluoride(in) = fluoride(out). Its activity is regulated as follows. Na(+) is not transported, but it plays an essential structural role and its presence is essential for fluoride channel function. Fluoride-specific ion channel. Important for reducing fluoride concentration in the cell, thus reducing its toxicity. This Francisella tularensis subsp. mediasiatica (strain FSC147) protein is Fluoride-specific ion channel FluC.